A 769-amino-acid chain; its full sequence is Serine/threonine-protein kinase PLK4 (769 aa).

In terms of domain architecture, Protein kinase spans 14–267; it reads YEVQHLLGKG…LEAVLCHPFM (254 aa). Residues 20-28 and lysine 43 each bind ATP; that span reads LGKGGFATV. Aspartate 138 functions as the Proton acceptor in the catalytic mechanism. Residues 381–498 form the Cryptic POLO box 1 (CPB1) domain; that stretch reads EDRISVPPLN…ARFVGLVKSK (118 aa). The Cryptic POLO box 2 (CPB2) domain occupies 499–602; sequence TPKVTYFSTL…GRRPITDVQP (104 aa). Residues 660-739 form the POLO box domain; it reads PIKRINVPDI…IPNIQLKLKT (80 aa).

This sequence belongs to the protein kinase superfamily. Ser/Thr protein kinase family. CDC5/Polo subfamily. As to quaternary structure, homodimer. In terms of processing, ubiquitinated by the SCF(Slimb) ubiquitin ligase complex; leading to its degradation by the proteasome during interphase and regulating centriole number and ensuring the block to centriole reduplication.

The protein resides in the cytoplasm. It is found in the cytoskeleton. Its subcellular location is the microtubule organizing center. It localises to the centrosome. The protein localises to the centriole. The enzyme catalyses L-seryl-[protein] + ATP = O-phospho-L-seryl-[protein] + ADP + H(+). It carries out the reaction L-threonyl-[protein] + ATP = O-phospho-L-threonyl-[protein] + ADP + H(+). Serine/threonine-protein kinase that plays a central role in centriole duplication. Able to trigger procentriole formation on the surface of the mother centriole cylinder, using mother centriole as a platform, leading to the recruitment of centriole biogenesis proteins such as sas-6. When overexpressed, it is able to induce centrosome amplification through the simultaneous generation of multiple procentrioles adjoining each parental centriole during S phase. Centrosome amplification following overexpression can initiate tumorigenesis, highlighting the importance of centrosome regulation in cancers. The polypeptide is Serine/threonine-protein kinase PLK4 (SAK) (Drosophila sechellia (Fruit fly)).